Reading from the N-terminus, the 414-residue chain is 3-oxoacyl-[acyl-carrier-protein] synthase 2 (414 aa).

The 408-residue stretch at 4-411 (NIRVVITGMG…GHNAVLVFKK (408 aa)) folds into the Ketosynthase family 3 (KS3) domain. Residues Cys165, His304, and His341 each act as for beta-ketoacyl synthase activity in the active site.

Belongs to the thiolase-like superfamily. Beta-ketoacyl-ACP synthases family.

The enzyme catalyses a fatty acyl-[ACP] + malonyl-[ACP] + H(+) = a 3-oxoacyl-[ACP] + holo-[ACP] + CO2. The catalysed reaction is (9Z)-hexadecenoyl-[ACP] + malonyl-[ACP] + H(+) = 3-oxo-(11Z)-octadecenoyl-[ACP] + holo-[ACP] + CO2. Its pathway is lipid metabolism; fatty acid biosynthesis. Its function is as follows. Involved in the type II fatty acid elongation cycle. Catalyzes the elongation of a wide range of acyl-ACP by the addition of two carbons from malonyl-ACP to an acyl acceptor. Can efficiently catalyze the conversion of palmitoleoyl-ACP (cis-hexadec-9-enoyl-ACP) to cis-vaccenoyl-ACP (cis-octadec-11-enoyl-ACP), an essential step in the thermal regulation of fatty acid composition. The polypeptide is 3-oxoacyl-[acyl-carrier-protein] synthase 2 (fabF) (Staphylococcus aureus (strain MRSA252)).